We begin with the raw amino-acid sequence, 406 residues long: Putative colanic acid biosynthesis glycosyltransferase WcaL (406 aa).

The protein belongs to the glycosyltransferase group 1 family. Glycosyltransferase 4 subfamily.

It participates in slime biogenesis; slime polysaccharide biosynthesis. This chain is Putative colanic acid biosynthesis glycosyltransferase WcaL (wcaL), found in Salmonella typhimurium (strain LT2 / SGSC1412 / ATCC 700720).